Reading from the N-terminus, the 517-residue chain is 2-isopropylmalate synthase (517 aa).

The region spanning 5–268 (IIIFDTTLRD…DTRINTQEIH (264 aa)) is the Pyruvate carboxyltransferase domain. Mn(2+)-binding residues include Asp14, His202, His204, and Asn238. The interval 393–517 (SLDVITSQTI…ADLKSHKISQ (125 aa)) is regulatory domain.

Belongs to the alpha-IPM synthase/homocitrate synthase family. LeuA type 1 subfamily. In terms of assembly, homodimer. The cofactor is Mn(2+).

Its subcellular location is the cytoplasm. It catalyses the reaction 3-methyl-2-oxobutanoate + acetyl-CoA + H2O = (2S)-2-isopropylmalate + CoA + H(+). It participates in amino-acid biosynthesis; L-leucine biosynthesis; L-leucine from 3-methyl-2-oxobutanoate: step 1/4. Catalyzes the condensation of the acetyl group of acetyl-CoA with 3-methyl-2-oxobutanoate (2-ketoisovalerate) to form 3-carboxy-3-hydroxy-4-methylpentanoate (2-isopropylmalate). The chain is 2-isopropylmalate synthase from Histophilus somni (strain 129Pt) (Haemophilus somnus).